A 204-amino-acid polypeptide reads, in one-letter code: MESLFSTMIVLLLVSFSCLISTEALTSNYGNITVKWDLLNWTPDGYVAVVTAYNYQKQRSIPGWKMSWRGTKKEVIWNMLGAKTTGQGGCSMFKGNIPQSCVRKPTVVDLLPGTPFNQQIANCCKSGVLKPGSESAFQLSVGSAGNSVKTARMPANFMFTAPKQQYICGPSKNVRPTRFTTADKRRITAALMTWNITCVFHKAT.

An N-terminal signal peptide occupies residues 1–24 (MESLFSTMIVLLLVSFSCLISTEA). Residues N31 and N195 are each glycosylated (N-linked (GlcNAc...) asparagine).

It belongs to the COBRA family. As to expression, expressed in roots, stems, leaves, flowers and siliques.

The sequence is that of COBRA-like protein 5 (COBL5) from Arabidopsis thaliana (Mouse-ear cress).